A 350-amino-acid chain; its full sequence is Uroporphyrinogen decarboxylase (350 aa).

Residues 28-32 (RQAGR), Asp78, Tyr155, Ser210, and His325 contribute to the substrate site.

The protein belongs to the uroporphyrinogen decarboxylase family. Homodimer.

The protein localises to the cytoplasm. It catalyses the reaction uroporphyrinogen III + 4 H(+) = coproporphyrinogen III + 4 CO2. It participates in porphyrin-containing compound metabolism; protoporphyrin-IX biosynthesis; coproporphyrinogen-III from 5-aminolevulinate: step 4/4. In terms of biological role, catalyzes the decarboxylation of four acetate groups of uroporphyrinogen-III to yield coproporphyrinogen-III. The protein is Uroporphyrinogen decarboxylase of Trichormus variabilis (strain ATCC 29413 / PCC 7937) (Anabaena variabilis).